Here is a 306-residue protein sequence, read N- to C-terminus: Brix domain-containing protein C4F8.04 (306 aa).

The tract at residues 16–49 is disordered; it reads KALHQKNKDKLERRKERAKEEEKDPEKKRLRLSE. A compositionally biased stretch (basic and acidic residues) spans 21-42; it reads KNKDKLERRKERAKEEEKDPEK. In terms of domain architecture, Brix spans 94–283; it reads PKLLVTTSKR…LRMVQKGVWD (190 aa).

The chain is Brix domain-containing protein C4F8.04 from Schizosaccharomyces pombe (strain 972 / ATCC 24843) (Fission yeast).